A 478-amino-acid polypeptide reads, in one-letter code: Divinyl ether synthase CYP74D2 (478 aa).

Heme is bound at residue Cys-431.

The protein belongs to the cytochrome P450 family. 9-divinyl ether synthase subfamily. In terms of tissue distribution, expressed in roots.

It catalyses the reaction (9S)-hydroperoxy-(10E,12Z)-octadecadienoate = colneleate + H2O. The enzyme catalyses (9S)-hydroperoxy-(10E,12Z,15Z)-octadecatrienoate = colnelenate + H2O. Involved in the biosynthesis of the anti-fungal and antibacterial toxins colneleate and colnelenate. Can use (9S)-hydroperoxy-(10E,12Z)-octadecadienoate (9-HPOD) and (9S)-hydroperoxy-(10E,12Z,15Z)-octadecatrienoate (9-HPOT) as substrates but has no activity with the corresponding 13-hydroperoxides (13-HPOD and 13-HPOT). The protein is Divinyl ether synthase CYP74D2 of Solanum tuberosum (Potato).